Consider the following 1347-residue polypeptide: Spermatogenesis-associated protein 31A1 (1347 aa).

The chain crosses the membrane as a helical span at residues 23–43 (PWVLDIFLTLVFALGFFFLLL). Disordered regions lie at residues 55-89 (PSPSPGKRKCPVGRRRRPRGRMKNHSLRAGRECPR), 106-235 (GPHL…STLI), 373-397 (EQDTTNPKPFWNMGENSKQLPGPQK), 628-658 (DESPGTSQAKGKPSPWQSSMSTGESSKEAQK), 899-955 (PRGI…REAV), and 1085-1160 (HEEP…PPSV). A compositionally biased stretch (basic residues) spans 60-82 (GKRKCPVGRRRRPRGRMKNHSLR). The span at 165-178 (LASTPSPGPMTTSV) shows a compositional bias: polar residues. Over residues 198-222 (PEPPALFPHPPHTPDPLACSPPPPK) the composition is skewed to pro residues. 2 stretches are compositionally biased toward polar residues: residues 631–651 (PGTSQAKGKPSPWQSSMSTGE) and 927–948 (LTYSLTGSTQQSRSLGAQSSKA). Basic and acidic residues-rich tracts occupy residues 1108–1127 (HKSEKSRKPNLEKHEERLEG) and 1137–1146 (RKTEDTHQDE).

The protein belongs to the SPATA31 family.

Its subcellular location is the membrane. Its function is as follows. May play a role in spermatogenesis. The sequence is that of Spermatogenesis-associated protein 31A1 from Homo sapiens (Human).